The chain runs to 129 residues: Small ribosomal subunit protein uS11 (129 aa).

Belongs to the universal ribosomal protein uS11 family. In terms of assembly, part of the 30S ribosomal subunit. Interacts with proteins S7 and S18. Binds to IF-3.

Its function is as follows. Located on the platform of the 30S subunit, it bridges several disparate RNA helices of the 16S rRNA. Forms part of the Shine-Dalgarno cleft in the 70S ribosome. The protein is Small ribosomal subunit protein uS11 of Actinobacillus succinogenes (strain ATCC 55618 / DSM 22257 / CCUG 43843 / 130Z).